The chain runs to 325 residues: AAAWMLNGCLQVMDSRTIPANRNADNVDPALQTATHLCFPTRPVRVQDVRAFILTSFGFGQKGGQVVGVAPKYFFATLDEEVYKDYSVRVTKRSKTADRAYAKALMSNAIVKVQDHSPYEQEDQSRIFMDPLSRITEDAETGSYHFDTKDIRNVADVKARLTRLVRGERLNARPDAASGLAQAARSAQAWIEKQTGGRSSVDTSTVGIDLVDLSAFSAHENETFIERNFTEQEKAFAKQSLDQKMAFASRWAAKEAVFKCLHTQTKGAGAAMKDIEIVKSDNAPQGQAGRKAGLEDIQLSISHGEDCLIAVAIGIAGNGPAKYTL.

Residue Asp209 participates in Mg(2+) binding. Residues 209-211 (DLV), 255-265 (EAVFKCLHTQT), 279-282 (KSDN), and 301-303 (ISH) contribute to the acetyl-CoA site. Ser302 is a Mg(2+) binding site.

This sequence belongs to the thiolase-like superfamily. Fungal fatty acid synthetase subunit alpha family. [Alpha(6)beta(6)] hexamers of two multifunctional subunits (alpha and beta). Post-translationally, 4'-phosphopantetheine is transferred from CoA to a specific serine of the acyl carrier domain by the C-terminal PPT domain. This modification is essential for activity because fatty acids are bound in thioester linkage to the sulfhydryl of the prosthetic group.

The enzyme catalyses acetyl-CoA + n malonyl-CoA + 2n NADPH + 4n H(+) = a long-chain-acyl-CoA + n CoA + n CO2 + 2n NADP(+).. It catalyses the reaction a fatty acyl-[ACP] + malonyl-[ACP] + H(+) = a 3-oxoacyl-[ACP] + holo-[ACP] + CO2. The catalysed reaction is a (3R)-hydroxyacyl-[ACP] + NADP(+) = a 3-oxoacyl-[ACP] + NADPH + H(+). It functions in the pathway mycotoxin biosynthesis. Its function is as follows. Fatty acid synthase alpha subunit; part of the fragmented gene cluster that mediates the biosynthesis of dothistromin (DOTH), a polyketide toxin very similar in structure to the aflatoxin precursor, versicolorin B. The first step of the pathway is the conversion of acetate to norsolorinic acid (NOR) and requires the fatty acid synthase subunits hexA and hexB, as well as the polyketide synthase pksA. PksA combines a hexanoyl starter unit and 7 malonyl-CoA extender units to synthesize the precursor NOR. The hexanoyl starter unit is provided to the acyl-carrier protein (ACP) domain by the fungal fatty acid synthase hexA/hexB. The second step is the conversion of NOR to averantin (AVN) and requires the norsolorinic acid ketoreductase nor1, which catalyzes the dehydration of norsolorinic acid to form (1'S)-averantin. The cytochrome P450 monooxygenase avnA then catalyzes the hydroxylation of AVN to 5'hydroxyaverantin (HAVN). The next step is performed by adhA that transforms HAVN to averufin (AVF). Averufin might then be converted to hydroxyversicolorone by cypX and avfA. Hydroxyversicolorone is further converted versiconal hemiacetal acetate (VHA) by moxY. VHA is then the substrate for the versiconal hemiacetal acetate esterase est1 to yield versiconal (VAL). Versicolorin B synthase vbsA then converts VAL to versicolorin B (VERB) by closing the bisfuran ring. Then, the activity of the versicolorin B desaturase verB leads to versicolorin A (VERA). DotB, a predicted chloroperoxidase, may perform epoxidation of the A-ring of VERA. Alternatively, a cytochrome P450, such as cypX or avnA could catalyze this step. It is also possible that another, uncharacterized, cytochrome P450 enzyme is responsible for this step. Opening of the epoxide could potentially be achieved by the epoxide hydrolase epoA. However, epoA seems not to be required for DOTH biosynthesis, but other epoxide hydrolases may have the ability to complement this hydrolysis. Alternatively, opening of the epoxide ring could be achieved non-enzymatically. The next step is the deoxygenation of ring A to yield the 5,8-dihydroxyanthraquinone which is most likely catalyzed by the NADPH dehydrogenase encoded by ver1. The last stages of DOTH biosynthesis are proposed to involve hydroxylation of the bisfuran. OrdB and norB might have oxidative roles here. An alternative possibility is that cytochrome P450 monoogenases such as avnA and cypX might perform these steps in addition to previously proposed steps. The protein is Fatty acid synthase alpha subunit hexA of Dothistroma septosporum (Red band needle blight fungus).